The following is a 276-amino-acid chain: Large ribosomal subunit protein uL2 (276 aa).

The interval valine 224 to lysine 276 is disordered. A compositionally biased stretch (basic residues) spans lysine 258–lysine 276.

It belongs to the universal ribosomal protein uL2 family. As to quaternary structure, part of the 50S ribosomal subunit. Forms a bridge to the 30S subunit in the 70S ribosome.

Functionally, one of the primary rRNA binding proteins. Required for association of the 30S and 50S subunits to form the 70S ribosome, for tRNA binding and peptide bond formation. It has been suggested to have peptidyltransferase activity; this is somewhat controversial. Makes several contacts with the 16S rRNA in the 70S ribosome. In Geobacillus thermodenitrificans (strain NG80-2), this protein is Large ribosomal subunit protein uL2.